A 487-amino-acid chain; its full sequence is Cobyric acid synthase (487 aa).

Residues Gly-249–Phe-435 form the GATase cobBQ-type domain. Cys-330 acts as the Nucleophile in catalysis. Residue His-427 is part of the active site.

The protein belongs to the CobB/CobQ family. CobQ subfamily.

It functions in the pathway cofactor biosynthesis; adenosylcobalamin biosynthesis. In terms of biological role, catalyzes amidations at positions B, D, E, and G on adenosylcobyrinic A,C-diamide. NH(2) groups are provided by glutamine, and one molecule of ATP is hydrogenolyzed for each amidation. The sequence is that of Cobyric acid synthase from Clostridium perfringens (strain ATCC 13124 / DSM 756 / JCM 1290 / NCIMB 6125 / NCTC 8237 / Type A).